A 355-amino-acid polypeptide reads, in one-letter code: Ubiquinone biosynthesis protein COQ4 homolog, mitochondrial (355 aa).

Zn(2+) is bound by residues His134, Asp135, His138, and Glu150.

Belongs to the COQ4 family. In terms of assembly, component of a multi-subunit COQ enzyme complex. It depends on Zn(2+) as a cofactor.

It localises to the mitochondrion inner membrane. It carries out the reaction a 4-hydroxy-3-methoxy-5-(all-trans-polyprenyl)benzoate + H(+) = a 2-methoxy-6-(all-trans-polyprenyl)phenol + CO2. Its pathway is cofactor biosynthesis; ubiquinone biosynthesis. Lyase that catalyzes the C1-decarboxylation of 4-hydroxy-3-methoxy-5-(all-trans-polyprenyl)benzoic acid into 2-methoxy-6-(all-trans-polyprenyl)phenol during ubiquinone biosynthesis. This Plasmodium falciparum (isolate 3D7) protein is Ubiquinone biosynthesis protein COQ4 homolog, mitochondrial.